The sequence spans 263 residues: uncharacterized protein (263 aa).

A Response regulatory domain is found at 6–121 (TAIIADDEPL…RLQTTCERVK (116 aa)). Position 58 is a 4-aspartylphosphate (Asp58). One can recognise an HTH LytTR-type domain in the interval 158–263 (IKATQGDDIH…RASQSLFKGM (106 aa)).

This is an uncharacterized protein from Vibrio parahaemolyticus serotype O3:K6 (strain RIMD 2210633).